A 240-amino-acid chain; its full sequence is Interleukin-1 receptor-associated kinase 1-binding protein 1 homolog (240 aa).

Belongs to the IRAK1BP1 family.

Its subcellular location is the cytoplasm. The protein localises to the nucleus. Its function is as follows. May be part of a signaling pathway that leads to NF-kappa-B activation. The sequence is that of Interleukin-1 receptor-associated kinase 1-binding protein 1 homolog (irak1bp1) from Oncorhynchus mykiss (Rainbow trout).